The following is a 159-amino-acid chain: Transcription elongation factor GreA (159 aa).

The protein belongs to the GreA/GreB family.

In terms of biological role, necessary for efficient RNA polymerase transcription elongation past template-encoded arresting sites. The arresting sites in DNA have the property of trapping a certain fraction of elongating RNA polymerases that pass through, resulting in locked ternary complexes. Cleavage of the nascent transcript by cleavage factors such as GreA or GreB allows the resumption of elongation from the new 3'terminus. GreA releases sequences of 2 to 3 nucleotides. The sequence is that of Transcription elongation factor GreA from Mycoplasmoides gallisepticum (strain R(low / passage 15 / clone 2)) (Mycoplasma gallisepticum).